We begin with the raw amino-acid sequence, 295 residues long: CRISPR-associated endonuclease Cas1 2 (295 aa).

Mn(2+) contacts are provided by Glu-155, His-215, and Glu-230.

Belongs to the CRISPR-associated endonuclease Cas1 family. Homodimer, forms a heterotetramer with a Cas2 homodimer. Mg(2+) serves as cofactor. Mn(2+) is required as a cofactor.

Functionally, CRISPR (clustered regularly interspaced short palindromic repeat), is an adaptive immune system that provides protection against mobile genetic elements (viruses, transposable elements and conjugative plasmids). CRISPR clusters contain spacers, sequences complementary to antecedent mobile elements, and target invading nucleic acids. CRISPR clusters are transcribed and processed into CRISPR RNA (crRNA). Acts as a dsDNA endonuclease. Involved in the integration of spacer DNA into the CRISPR cassette. The polypeptide is CRISPR-associated endonuclease Cas1 2 (Pyrobaculum aerophilum (strain ATCC 51768 / DSM 7523 / JCM 9630 / CIP 104966 / NBRC 100827 / IM2)).